We begin with the raw amino-acid sequence, 145 residues long: Hemoglobin subunit beta (145 aa).

A Globin domain is found at 1–145; the sequence is MLTAEEKAAV…VANALAHRYH (145 aa). The residue at position 11 (T11) is a Phosphothreonine. S43 carries the phosphoserine modification. An N6-acetyllysine modification is found at K58. Residue H62 coordinates heme b. K81 carries the post-translational modification N6-acetyllysine. H91 is a heme b binding site. C92 bears the S-nitrosocysteine mark.

It belongs to the globin family. In terms of assembly, heterotetramer of two alpha chains and two beta chains. In terms of tissue distribution, red blood cells.

Involved in oxygen transport from the lung to the various peripheral tissues. This chain is Hemoglobin subunit beta (HBB), found in Tragelaphus strepsiceros (Greater kudu).